Here is a 379-residue protein sequence, read N- to C-terminus: Succinyl-diaminopimelate desuccinylase (379 aa).

H70 contributes to the Zn(2+) binding site. Residue D72 is part of the active site. D103 serves as a coordination point for Zn(2+). E137 (proton acceptor) is an active-site residue. E138, E166, and H352 together coordinate Zn(2+).

Belongs to the peptidase M20A family. DapE subfamily. Homodimer. It depends on Zn(2+) as a cofactor. Co(2+) is required as a cofactor.

The enzyme catalyses N-succinyl-(2S,6S)-2,6-diaminopimelate + H2O = (2S,6S)-2,6-diaminopimelate + succinate. It participates in amino-acid biosynthesis; L-lysine biosynthesis via DAP pathway; LL-2,6-diaminopimelate from (S)-tetrahydrodipicolinate (succinylase route): step 3/3. Its function is as follows. Catalyzes the hydrolysis of N-succinyl-L,L-diaminopimelic acid (SDAP), forming succinate and LL-2,6-diaminopimelate (DAP), an intermediate involved in the bacterial biosynthesis of lysine and meso-diaminopimelic acid, an essential component of bacterial cell walls. In Shewanella sp. (strain W3-18-1), this protein is Succinyl-diaminopimelate desuccinylase.